Consider the following 413-residue polypeptide: Multifunctional CCA protein (413 aa).

The ATP site is built by Gly-8 and Arg-11. Residues Gly-8 and Arg-11 each contribute to the CTP site. 2 residues coordinate Mg(2+): Glu-21 and Asp-23. ATP-binding residues include Arg-91, Arg-137, and Arg-140. CTP is bound by residues Arg-91, Arg-137, and Arg-140. The HD domain occupies Thr-228–Phe-329.

Belongs to the tRNA nucleotidyltransferase/poly(A) polymerase family. Bacterial CCA-adding enzyme type 1 subfamily. As to quaternary structure, monomer. Can also form homodimers and oligomers. Requires Mg(2+) as cofactor. Ni(2+) is required as a cofactor.

The enzyme catalyses a tRNA precursor + 2 CTP + ATP = a tRNA with a 3' CCA end + 3 diphosphate. It catalyses the reaction a tRNA with a 3' CCA end + 2 CTP + ATP = a tRNA with a 3' CCACCA end + 3 diphosphate. Catalyzes the addition and repair of the essential 3'-terminal CCA sequence in tRNAs without using a nucleic acid template. Adds these three nucleotides in the order of C, C, and A to the tRNA nucleotide-73, using CTP and ATP as substrates and producing inorganic pyrophosphate. tRNA 3'-terminal CCA addition is required both for tRNA processing and repair. Also involved in tRNA surveillance by mediating tandem CCA addition to generate a CCACCA at the 3' terminus of unstable tRNAs. While stable tRNAs receive only 3'-terminal CCA, unstable tRNAs are marked with CCACCA and rapidly degraded. In Alkalilimnicola ehrlichii (strain ATCC BAA-1101 / DSM 17681 / MLHE-1), this protein is Multifunctional CCA protein.